We begin with the raw amino-acid sequence, 365 residues long: tRNA/tmRNA (uracil-C(5))-methyltransferase (365 aa).

S-adenosyl-L-methionine-binding residues include Gln-188, Tyr-216, Asn-221, Glu-237, and Asp-297. Cys-322 serves as the catalytic Nucleophile. Glu-356 functions as the Proton acceptor in the catalytic mechanism.

It belongs to the class I-like SAM-binding methyltransferase superfamily. RNA M5U methyltransferase family. TrmA subfamily.

The catalysed reaction is uridine(54) in tRNA + S-adenosyl-L-methionine = 5-methyluridine(54) in tRNA + S-adenosyl-L-homocysteine + H(+). It carries out the reaction uridine(341) in tmRNA + S-adenosyl-L-methionine = 5-methyluridine(341) in tmRNA + S-adenosyl-L-homocysteine + H(+). Dual-specificity methyltransferase that catalyzes the formation of 5-methyluridine at position 54 (m5U54) in all tRNAs, and that of position 341 (m5U341) in tmRNA (transfer-mRNA). The polypeptide is tRNA/tmRNA (uracil-C(5))-methyltransferase (Aggregatibacter aphrophilus (strain NJ8700) (Haemophilus aphrophilus)).